The primary structure comprises 256 residues: Imidazole glycerol phosphate synthase subunit HisF (256 aa).

Residues aspartate 11 and aspartate 130 contribute to the active site.

Belongs to the HisA/HisF family. As to quaternary structure, heterodimer of HisH and HisF.

Its subcellular location is the cytoplasm. The enzyme catalyses 5-[(5-phospho-1-deoxy-D-ribulos-1-ylimino)methylamino]-1-(5-phospho-beta-D-ribosyl)imidazole-4-carboxamide + L-glutamine = D-erythro-1-(imidazol-4-yl)glycerol 3-phosphate + 5-amino-1-(5-phospho-beta-D-ribosyl)imidazole-4-carboxamide + L-glutamate + H(+). The protein operates within amino-acid biosynthesis; L-histidine biosynthesis; L-histidine from 5-phospho-alpha-D-ribose 1-diphosphate: step 5/9. Its function is as follows. IGPS catalyzes the conversion of PRFAR and glutamine to IGP, AICAR and glutamate. The HisF subunit catalyzes the cyclization activity that produces IGP and AICAR from PRFAR using the ammonia provided by the HisH subunit. The chain is Imidazole glycerol phosphate synthase subunit HisF from Cupriavidus metallidurans (strain ATCC 43123 / DSM 2839 / NBRC 102507 / CH34) (Ralstonia metallidurans).